A 102-amino-acid chain; its full sequence is Small ribosomal subunit protein uS10 (102 aa).

This sequence belongs to the universal ribosomal protein uS10 family. In terms of assembly, part of the 30S ribosomal subunit.

Involved in the binding of tRNA to the ribosomes. This chain is Small ribosomal subunit protein uS10, found in Heliobacterium modesticaldum (strain ATCC 51547 / Ice1).